Reading from the N-terminus, the 130-residue chain is uncharacterized protein (130 aa).

Residues 1–100 form a disordered region; the sequence is MSSNSDNTEC…AEPDAAKEEP (100 aa). Basic and acidic residues-rich tracts occupy residues 57–75 and 91–100; these read YTTRSKYESDVSEFKKMMD and AEPDAAKEEP.

This is an uncharacterized protein from Equine herpesvirus 1 (strain Ab4p) (EHV-1).